The following is a 294-amino-acid chain: tRNA dimethylallyltransferase (294 aa).

10-17 (GPTAVGKT) is an ATP binding site. 12-17 (TAVGKT) serves as a coordination point for substrate. The segment at 35–38 (DSQQ) is interaction with substrate tRNA.

Belongs to the IPP transferase family. In terms of assembly, monomer. It depends on Mg(2+) as a cofactor.

The enzyme catalyses adenosine(37) in tRNA + dimethylallyl diphosphate = N(6)-dimethylallyladenosine(37) in tRNA + diphosphate. Its function is as follows. Catalyzes the transfer of a dimethylallyl group onto the adenine at position 37 in tRNAs that read codons beginning with uridine, leading to the formation of N6-(dimethylallyl)adenosine (i(6)A). This chain is tRNA dimethylallyltransferase, found in Streptococcus pneumoniae (strain Hungary19A-6).